A 353-amino-acid polypeptide reads, in one-letter code: Thiamine thiazole synthase 1, chloroplastic (353 aa).

The transit peptide at 1–48 directs the protein to the chloroplast; the sequence is MATLTSSICSKPKASVFDPHKSSFHGVPIATQARLSPVKSTPVNLAVT. Residues alanine 97, 117-118, glycine 125, and alanine 190 contribute to the substrate site; that span reads EQ. Residue cysteine 219 is modified to 2,3-didehydroalanine (Cys). Substrate contacts are provided by residues aspartate 221, histidine 236, methionine 288, and 298 to 300; that span reads RMG.

This sequence belongs to the THI4 family. In terms of assembly, homooctamer. The cofactor is Fe cation. During the catalytic reaction, a sulfide is transferred from Cys-219 to a reaction intermediate, generating a dehydroalanine residue.

It localises to the plastid. The protein resides in the chloroplast. It catalyses the reaction [ADP-thiazole synthase]-L-cysteine + glycine + NAD(+) = [ADP-thiazole synthase]-dehydroalanine + ADP-5-ethyl-4-methylthiazole-2-carboxylate + nicotinamide + 3 H2O + 2 H(+). In terms of biological role, involved in biosynthesis of the thiamine precursor thiazole. Catalyzes the conversion of NAD and glycine to adenosine diphosphate 5-(2-hydroxyethyl)-4-methylthiazole-2-carboxylic acid (ADT), an adenylated thiazole intermediate. The reaction includes an iron-dependent sulfide transfer from a conserved cysteine residue of the protein to a thiazole intermediate. The enzyme can only undergo a single turnover, which suggests it is a suicide enzyme. May have additional roles in adaptation to various stress conditions and in DNA damage tolerance. In Vitis vinifera (Grape), this protein is Thiamine thiazole synthase 1, chloroplastic.